The chain runs to 857 residues: Dynein regulatory complex protein 11 (857 aa).

Residues 206-235 enclose the IQ domain; sequence TKLAALQIQKVWRGFHQCKKTVKEREEEMV. The interval 348–388 is disordered; it reads EEKLKKKKKKEDKENKGKKGKKEKKEKKEKKVSLKEKAMKD. Over residues 365–375 the composition is skewed to basic residues; the sequence is KKGKKEKKEKK. The span at 376-387 shows a compositional bias: basic and acidic residues; sequence EKKVSLKEKAMK. Residue 598–605 participates in ATP binding; the sequence is GPSGVGKK. The disordered stretch occupies residues 834-857; the sequence is SLTVGNKEKEKDKGKKGKRGKKKK. A compositionally biased stretch (basic residues) spans 847-857; the sequence is GKKGKRGKKKK.

Belongs to the AAA ATPase family. DRC11 subfamily. As to quaternary structure, component of the nexin-dynein regulatory complex (N-DRC).

It is found in the cytoplasm. The protein resides in the cytoskeleton. The protein localises to the flagellum axoneme. In terms of biological role, component of the nexin-dynein regulatory complex (N-DRC), a key regulator of ciliary/flagellar motility which maintains the alignment and integrity of the distal axoneme and regulates microtubule sliding in motile axonemes. The sequence is that of Dynein regulatory complex protein 11 (Iqca1) from Mus musculus (Mouse).